The chain runs to 507 residues: MATLRVDEINKILRERIEQYNRKVGIENIGRVVQVGDGIARIIGLGEIMSGELVEFAEGTRGIALNLESKNVGIVLMGDGLMIQEGSFVKATGRIAQIPVSEAYLGRVINALAKPIDGRGEIVASESRLIESPAPGIISRRSVYEPLQTGLIAIDSMIPIGRGQRELIIGDRQTGKTAVATDTILNQKGQDVICVYVAIGQRASSVAQVVTTFHEEGAMEYTIVVAEMADSPATLQYLAPYTGAALAEYFMYRERHTLIIYDDLSKQAQAYRQMSLLLRRPPGREAYPGDVFYLHSRLLERAAKFNSLLGEGSMTALPIVETQSGDVSAYIPTNVISITDGQIFLSADLFNAGIRPAINVGISVSRVGSAAQIKAMKQVAGKLKLELAQFAELQAFAQFASALDKTSQNQLARGRRLRELLKQSQSNPLPVEEQVATIYTGTRGYLDSLEIEQVKKFLDELRKHLKDTKPQFQEIISSSKTFTEQAETLLKEAIQEQLERFSLQEQT.

An ATP-binding site is contributed by Ile169–Lys176.

It belongs to the ATPase alpha/beta chains family. As to quaternary structure, F-type ATPases have 2 components, CF(1) - the catalytic core - and CF(0) - the membrane proton channel. CF(1) has five subunits: alpha(3), beta(3), gamma(1), delta(1), epsilon(1). CF(0) has four main subunits: a, b, b' and c.

Its subcellular location is the plastid. The protein localises to the chloroplast thylakoid membrane. The catalysed reaction is ATP + H2O + 4 H(+)(in) = ADP + phosphate + 5 H(+)(out). In terms of biological role, produces ATP from ADP in the presence of a proton gradient across the membrane. The alpha chain is a regulatory subunit. The polypeptide is ATP synthase subunit alpha, chloroplastic (Saccharum hybrid (Sugarcane)).